The sequence spans 688 residues: PR domain zinc finger protein 8 (688 aa).

In terms of domain architecture, SET spans 16–131 (KAVQQCLTDI…KDEELLVWYG (116 aa)). Residue tyrosine 130 participates in S-adenosyl-L-methionine binding. The C2H2-type 1 zinc finger occupies 154-182 (YTCLECSQRFQFEFPYVAHLRFRCPKRLH). Disordered regions lie at residues 184-309 (TDAN…GCKG) and 397-506 (EEAA…PARS). Residues 192 to 208 (QGGGLGTKDHGGGGGGK) show a composition bias toward gly residues. Low complexity-rich tracts occupy residues 209–219 (EQQQQQQQQQQ) and 275–284 (GSSSCVAAPG). Composition is skewed to gly residues over residues 414–424 (AGGGVAGGGSN) and 470–489 (LGGGGGAGTAGTAGGSGGGQ). 2 consecutive C2H2-type zinc fingers follow at residues 624-647 (NWCAKCNASFRMTSDLVYHMRSHH) and 665-687 (LKCPICNESFRERHHLSRHMTSH).

This sequence belongs to the class V-like SAM-binding methyltransferase superfamily. As to quaternary structure, interacts with BHLHE22. Interacts with EPM2A and NHLRC1. This interaction sequesters EPM2A and NHLRC1 to the nucleus. Expressed in brain, heart, liver, testes, retina. Highest expression is observed in the retina and hippocampus; moderately expressed in the cortex and cerebellum. In the retina, it is expressed in bipolar and amacrine cells.

It is found in the nucleus. Functionally, probable histone methyltransferase, preferentially acting on 'Lys-9' of histone H3. Histone methyltransferase activity has not been confirmed in other species. Involved in the control of steroidogenesis through transcriptional repression of steroidogenesis marker genes such as CYP17A1 and LHCGR. Forms with BHLHE22 a transcriptional repressor complex controlling genes involved in neural development and neuronal differentiation. In the retina, it is required for rod bipolar and type 2 OFF-cone bipolar cell survival. The polypeptide is PR domain zinc finger protein 8 (Prdm8) (Mus musculus (Mouse)).